A 248-amino-acid polypeptide reads, in one-letter code: N-acylneuraminate-9-phosphatase (248 aa).

Asp-12 is a binding site for Mg(2+). Residues Leu-13, Asp-14, Thr-131, Asn-132, and Lys-164 each contribute to the phosphate site. Residue Asp-14 participates in Mg(2+) binding. Asp-189 contacts Mg(2+).

It belongs to the HAD-like hydrolase superfamily. NANP family. Requires Mg(2+) as cofactor.

It catalyses the reaction N-acetylneuraminate 9-phosphate + H2O = N-acetylneuraminate + phosphate. The enzyme catalyses N-glycoloylneuraminate 9-phosphate + H2O = N-glycoloylneuraminate + phosphate. It functions in the pathway amino-sugar metabolism; N-acetylneuraminate biosynthesis. Inhibited by calcium. Inhibited by vanadate, sodium orthovanate and phosphonate. Functionally, catalyzes the dephosphorylation of N-acylneuraminate 9-phosphate (Neu5Ac-9-P) to sialic acid N-acetylneuraminic acid (Neu5Ac). May also use N-glycoloylneuraminate 9-phosphate as substrate. The protein is N-acylneuraminate-9-phosphatase of Mus musculus (Mouse).